The sequence spans 426 residues: Serine--tRNA ligase (426 aa).

233 to 235 (TAE) contributes to the L-serine binding site. Residue 264–266 (RSE) participates in ATP binding. Glu287 serves as a coordination point for L-serine. 351–354 (EISS) is a binding site for ATP. Position 387 (Ser387) interacts with L-serine.

Belongs to the class-II aminoacyl-tRNA synthetase family. Type-1 seryl-tRNA synthetase subfamily. Homodimer. The tRNA molecule binds across the dimer.

It is found in the cytoplasm. It catalyses the reaction tRNA(Ser) + L-serine + ATP = L-seryl-tRNA(Ser) + AMP + diphosphate + H(+). The enzyme catalyses tRNA(Sec) + L-serine + ATP = L-seryl-tRNA(Sec) + AMP + diphosphate + H(+). It functions in the pathway aminoacyl-tRNA biosynthesis; selenocysteinyl-tRNA(Sec) biosynthesis; L-seryl-tRNA(Sec) from L-serine and tRNA(Sec): step 1/1. Functionally, catalyzes the attachment of serine to tRNA(Ser). Is also able to aminoacylate tRNA(Sec) with serine, to form the misacylated tRNA L-seryl-tRNA(Sec), which will be further converted into selenocysteinyl-tRNA(Sec). The chain is Serine--tRNA ligase from Francisella philomiragia subsp. philomiragia (strain ATCC 25017 / CCUG 19701 / FSC 153 / O#319-036).